Consider the following 1048-residue polypeptide: Ceruloplasmin (1048 aa).

A signal peptide spans 1-19; it reads MKIFLLCIFLILCGTSVWA. Plastocyanin-like domains are found at residues 20 to 200, 209 to 357, and 370 to 554; these read KDKH…LIHC, KEKN…VQDC, and NVRH…MKIC. Residues tyrosine 55, glycine 64, and tyrosine 67 each contribute to the Na(+) site. Residues histidine 120 and histidine 122 each contribute to the Cu(2+) site. Histidine 120 contributes to the O2 binding site. Lysine 128 contacts Ca(2+). N-linked (GlcNAc...) asparagine glycosylation is present at asparagine 138. Ca(2+) contacts are provided by glutamine 143, aspartate 146, and aspartate 147. Cysteine 174 and cysteine 200 form a disulfide bridge. Residues histidine 180 and histidine 182 each coordinate Cu(2+). Histidine 180 serves as a coordination point for O2. N-linked (GlcNAc...) asparagine glycosylation occurs at asparagine 227. Serine 256 serves as a coordination point for Na(+). Residues cysteine 276 and cysteine 357 are joined by a disulfide bond. The Cu(2+) site is built by histidine 295, cysteine 338, and histidine 343. The Na(+) site is built by phenylalanine 408, glycine 417, and tyrosine 420. An intrachain disulfide couples cysteine 530 to cysteine 554. N-linked (GlcNAc...) asparagine glycans are attached at residues asparagine 556 and asparagine 582. The region spanning 564–712 is the Plastocyanin-like 4 domain; the sequence is RLKNVDKEFY…MKQKYTVSQC (149 aa). Serine 611 contacts Na(+). Residues cysteine 631 and cysteine 712 are joined by a disulfide bond. Histidine 650, cysteine 693, histidine 698, and methionine 703 together coordinate Cu(2+). Cysteine 693 acts as the Nucleophile; for glutathione peroxidase activity in catalysis. Serine 716 is modified (phosphoserine). 2 consecutive Plastocyanin-like domains span residues 724-894 and 902-1044; these read GERT…LIVC and SNPI…PNEE. Asparagine 756 carries an N-linked (GlcNAc...) asparagine glycan. Phenylalanine 761, glycine 770, and tyrosine 773 together coordinate Na(+). The cysteines at positions 868 and 894 are disulfide-linked. Asparagine 920 carries an N-linked (GlcNAc...) asparagine glycan. Position 949 (serine 949) interacts with Na(+). Histidine 977, histidine 980, histidine 982, histidine 1022, cysteine 1023, histidine 1024, histidine 1028, and methionine 1033 together coordinate Cu(2+). 2 residues coordinate O2: histidine 980 and histidine 982. Histidine 1024 contributes to the O2 binding site.

The protein belongs to the multicopper oxidase family. In terms of assembly, found in a complex with MPO and LTF; interacts directly with MPO and LTF, which allows Fe(3+) incorporation into LTF, activation of CP ferroxidase activity and protection of CP antioxidant properties by MPO. Cu(2+) is required as a cofactor. As to expression, expressed by the liver and secreted in plasma. Also expressed in the hypothalamus, spleen and uterus. No expression in the cortex, heart, intestine or kidney.

The protein localises to the secreted. The catalysed reaction is 4 Fe(2+) + O2 + 4 H(+) = 4 Fe(3+) + 2 H2O. It carries out the reaction 4 Cu(+) + O2 + 4 H(+) = 4 Cu(2+) + 2 H2O. The enzyme catalyses a hydroperoxide + 2 glutathione = an alcohol + glutathione disulfide + H2O. It catalyses the reaction 4 nitric oxide + O2 + 2 H2O = 4 nitrite + 4 H(+). The catalysed reaction is 2 glutathione + H2O2 = glutathione disulfide + 2 H2O. Functionally, multifunctional blue, copper-binding (6-7 atoms per molecule) glycoprotein. It has ferroxidase activity oxidizing Fe(2+) to Fe(3+) without releasing radical oxygen species. It is involved in iron transport across the cell membrane. Copper ions provide a large number of enzymatic activites. Oxidizes highly toxic ferrous ions to the ferric state for further incorporation onto apo-transferrins, catalyzes Cu(+) oxidation and promotes the oxidation of biogenic amines such as norepinephrin and serotonin. Provides Cu(2+) ions for the ascorbate-mediated deaminase degradation of the heparan sulfate chains of GPC1. Has glutathione peroxidase-like activity, can remove both hydrogen peroxide and lipid hydroperoxide in the presence of thiols. Also shows NO-oxidase and NO2 synthase activities that determine endocrine NO homeostasis. This chain is Ceruloplasmin (CP), found in Ovis aries (Sheep).